Consider the following 625-residue polypeptide: Endoglucanase D (625 aa).

An N-terminal signal peptide occupies residues 1-17 (SLTGVFPSGLIETKVSA). Asp177 serves as the catalytic Nucleophile. Residues His492 and Asp522 contribute to the active site. The active-site Proton donor is the Glu531. One can recognise a Dockerin domain in the interval 555–625 (NEVLYGDVND…LIRVIEKLPI (71 aa)).

Belongs to the glycosyl hydrolase 9 (cellulase E) family. It depends on Ca(2+) as a cofactor.

It carries out the reaction Endohydrolysis of (1-&gt;4)-beta-D-glucosidic linkages in cellulose, lichenin and cereal beta-D-glucans.. In terms of biological role, this enzyme catalyzes the endohydrolysis of 1,4-beta-glucosidic linkages in cellulose, lichenin and cereal beta-D-glucans. This is Endoglucanase D (celD) from Acetivibrio thermocellus (Hungateiclostridium thermocellum).